Reading from the N-terminus, the 911-residue chain is Inter-alpha-trypsin inhibitor heavy chain H1 (911 aa).

The first 27 residues, 1–27 (MDGAMGPRGLLLCMYLVSLLILQAMPA), serve as a signal peptide directing secretion. A propeptide spanning residues 28 to 34 (LGSATGR) is cleaved from the precursor. The region spanning 37–166 (SSEKRQAVDT…KVTFQLTYEE (130 aa)) is the VIT domain. Residue C60 is glycosylated (S-linked (Hex...) cysteine). The residue at position 129 (S129) is a Phosphoserine. The Phagocytosis uptake signal signature appears at 181–184 (VKPK). Intrachain disulfides connect C244–C247 and C268–C540. Residue N285 is glycosylated (N-linked (GlcNAc...) (complex) asparagine). The VWFA domain maps to 290 to 450 (NKNVVFVIDI…FNFLEVMSME (161 aa)). The interval 387-911 (SLPELSNHAS…YTDYIVPDIF (525 aa)) is hyaluronan-binding. A phosphothreonine mark is found at T402 and T407. N588 carries N-linked (GlcNAc...) (complex) asparagine glycosylation. Residue T653 is glycosylated (O-linked (GalNAc...) threonine). D672 carries the post-translational modification Aspartate 1-(chondroitin 4-sulfate)-ester. A propeptide spanning residues 673–911 (PHFIIHVPQK…YTDYIVPDIF (239 aa)) is cleaved from the precursor. N-linked (GlcNAc...) asparagine glycosylation is present at N750.

Belongs to the ITIH family. As to quaternary structure, I-alpha-I plasma protease inhibitors are assembled from one or two heavy chains (HC) and one light chain, bikunin. Inter-alpha-inhibitor (I-alpha-I) is composed of ITIH1/HC1, ITIH2/HC2 and bikunin. Interacts with TNFAIP6 (via Link and CUB domains). Heavy chains are linked to bikunin via chondroitin 4-sulfate esterified to the alpha-carboxyl of the C-terminal aspartate after propeptide cleavage. Post-translationally, the S-linked glycan is composed of two 6-carbon sugars, possibly Glc or Gal.

Its subcellular location is the secreted. Functionally, may act as a carrier of hyaluronan in serum or as a binding protein between hyaluronan and other matrix protein, including those on cell surfaces in tissues to regulate the localization, synthesis and degradation of hyaluronan which are essential to cells undergoing biological processes. Contains a potential peptide which could stimulate a broad spectrum of phagocytotic cells. The chain is Inter-alpha-trypsin inhibitor heavy chain H1 (ITIH1) from Homo sapiens (Human).